Here is a 354-residue protein sequence, read N- to C-terminus: MELPKLLISLFLFSFSSFFLGAESDYPQHSNLKRLRPNRLFVFGDSYADTGNIRKSLSDSWKIPYGITFPQKPSGRFSDGRVATDFLARYLGIKSPIPYTWKDYAGKERLLYGMNYAYGGTGVFKTKDNPLPNMTTQIDYFQRVLAAGNIYSPSDLPSSLALVSVAGNDYATFLALKRPLTELPAFMKQVVDQIAVNAMRIHKLGVNKIVIPSMQPLGCLPSITVFNSFQRCNATDNASTNLHNYLLHKAIARLNNETKPSTFVVLDHYNAFLTVFKNKGPEPGVSRFGNPLKPCCVGVNSSYDCSNVDEKGEKKYIICEDPKAAFFWDIFHPSEEGWRSVYSVLHKHLKAIWI.

An N-terminal signal peptide occupies residues 1–24; it reads MELPKLLISLFLFSFSSFFLGAES. The active-site Nucleophile is the S46. N-linked (GlcNAc...) asparagine glycosylation is found at N133, N233, N237, N256, and N300. Active-site residues include D329 and H332.

It belongs to the 'GDSL' lipolytic enzyme family.

It is found in the secreted. This is GDSL esterase/lipase At3g09930 from Arabidopsis thaliana (Mouse-ear cress).